The following is a 1388-amino-acid chain: Kinesin-like protein KIF15 (1388 aa).

Residues 1–25 (MAPGCKTELRSVTNGQSNQPSNEGD) are disordered. Residues 10–22 (RSVTNGQSNQPSN) are compositionally biased toward polar residues. The region spanning 26-363 (AIKVFVRIRP…LNFAQRAKLI (338 aa)) is the Kinesin motor domain. ATP is bound at residue 109–116 (GQTGSGKT). Residues 368 to 1388 (VVNEDTQGNV…FLKEKKRSES (1021 aa)) adopt a coiled-coil conformation. The residue at position 399 (Thr399) is a Phosphothreonine. Ser568 carries the post-translational modification Phosphoserine. Lys1009 is modified (N6-acetyllysine). Phosphoserine occurs at positions 1141 and 1169. The tract at residues 1228–1250 (QKENSDQNHPDNQQLKNEQEESI) is disordered.

Belongs to the TRAFAC class myosin-kinesin ATPase superfamily. Kinesin family. KLP2 subfamily. As to quaternary structure, interacts with MKI67 and TPX2. In terms of tissue distribution, expressed in testis, colon, thymus and in breast cancer.

It is found in the cytoplasm. The protein resides in the cytoskeleton. It localises to the spindle. Plus-end directed kinesin-like motor enzyme involved in mitotic spindle assembly. The chain is Kinesin-like protein KIF15 (KIF15) from Homo sapiens (Human).